Reading from the N-terminus, the 238-residue chain is uncharacterized protein (238 aa).

The next 4 helical transmembrane spans lie at 16 to 36, 44 to 64, 81 to 101, and 123 to 143; these read HLII…IGLE, VGVK…IVSI, PMRL…GVIL, and IGIA…VMIL.

The protein belongs to the MgtC/SapB family.

It is found in the cell inner membrane. This is an uncharacterized protein from Haemophilus influenzae (strain ATCC 51907 / DSM 11121 / KW20 / Rd).